The following is a 430-amino-acid chain: Threonine synthase (430 aa).

Residue Lys108 is modified to N6-(pyridoxal phosphate)lysine.

The protein belongs to the threonine synthase family. Requires pyridoxal 5'-phosphate as cofactor.

The enzyme catalyses O-phospho-L-homoserine + H2O = L-threonine + phosphate. It participates in amino-acid biosynthesis; L-threonine biosynthesis; L-threonine from L-aspartate: step 5/5. Its function is as follows. Catalyzes the gamma-elimination of phosphate from L-phosphohomoserine and the beta-addition of water to produce L-threonine. The sequence is that of Threonine synthase (thrC) from Buchnera aphidicola subsp. Baizongia pistaciae (strain Bp).